Consider the following 145-residue polypeptide: Ribonuclease H (145 aa).

Residues 1 to 141 form the RNase H type-1 domain; that stretch reads MQEVTIYSDG…ADALANRGVE (141 aa). 4 residues coordinate Mg(2+): Asp-9, Glu-47, Asp-69, and Asp-133.

It belongs to the RNase H family. In terms of assembly, monomer. Mg(2+) is required as a cofactor.

The protein resides in the cytoplasm. It carries out the reaction Endonucleolytic cleavage to 5'-phosphomonoester.. Its function is as follows. Endonuclease that specifically degrades the RNA of RNA-DNA hybrids. The protein is Ribonuclease H of Cupriavidus necator (strain ATCC 17699 / DSM 428 / KCTC 22496 / NCIMB 10442 / H16 / Stanier 337) (Ralstonia eutropha).